The sequence spans 362 residues: MTGLLLKDIRKSYGAVDVIHGIDLDIKEGEFVVFVGPSGCGKSTLLRMIAGLEEITGGDMFIDGERVNDVPPSKRGIAMVFQSYALYPHMTVYDNMAFGMRIARESKEEIDRRVRGAADMLQLTPYLDRLPKALSGGQRQRVAIGRAICRNPKVFLFDEPLSNLDAALRVATRIEIAKLSERMSDTTMIYVTHDQVEAMTLADRIVVLSAGHIEQVGAPLELYERPANLFVARFIGSPAMNVIPATITATGQQTAVSLAGGKSVTLDVPTNASENGKTASFGVRPEDLRVTEADDFLFEGTVSIVEALGEVTLLYIEGLVENEPIIAKMPGIARVGRGDKVRFTADKAKLHLFDTNGQSYRA.

An ABC transporter domain is found at 4-235 (LLLKDIRKSY…PANLFVARFI (232 aa)). 36–43 (GPSGCGKS) contacts ATP.

This sequence belongs to the ABC transporter superfamily.

It localises to the cell inner membrane. Part of the binding-protein-dependent transport system for alpha-glucosides such as sucrose, maltose and trehalose. Probably responsible for energy coupling to the transport system. This Rhizobium meliloti (strain 1021) (Ensifer meliloti) protein is Alpha-glucoside transport ATP-binding protein AglK (aglK).